Here is a 426-residue protein sequence, read N- to C-terminus: MNEWRTVSLVDSTALTVIISVAVFTSAVALLGVVKKRSRWRVLGALISSAVLTSGAWVVIEKLWKPFPDPNPWTIYLSAGLAVFPLLSILFRTGRTRILMATLTVIALVNTAAVINVIYQPYPTLGSFNPVPTAVSMSYADFESQTTAPTMDDREVGALVQVPLAGTTDDSTSGFDARDAYAYIPPAYWDNPSLQLPVLVLMPGNPGQPDQWFSSGNADQTADNFQATHDGISPIVISVDGTGSFSGNPACVDSDAQSVMTYLSHDVPMLIKQKFRVNQDQRTWTIGGLSYGGTCALQIMTNHPEAYGSFLDFSGQEEPTLGTRQQTVDQLFGGDEDAFKAVNPEDLLNQAISSGAHTYSGISGRFIAGSNDKSAVSALSHLDNLSNQAGMSTTFDTVAGGHSFQVWRVALANTFDWVAKRGGLQV.

This is an uncharacterized protein from Corynebacterium glutamicum (strain ATCC 13032 / DSM 20300 / JCM 1318 / BCRC 11384 / CCUG 27702 / LMG 3730 / NBRC 12168 / NCIMB 10025 / NRRL B-2784 / 534).